Reading from the N-terminus, the 853-residue chain is DNA mismatch repair protein MutS (853 aa).

An ATP-binding site is contributed by 614–621 (GPNMGGKS).

It belongs to the DNA mismatch repair MutS family.

In terms of biological role, this protein is involved in the repair of mismatches in DNA. It is possible that it carries out the mismatch recognition step. This protein has a weak ATPase activity. In Escherichia coli (strain 55989 / EAEC), this protein is DNA mismatch repair protein MutS.